Consider the following 142-residue polypeptide: Small ribosomal subunit protein bS16 (142 aa).

The tract at residues 88–142 is disordered; that stretch reads GAEGTLRQPEGKTPFVAPDNGSVIIPEAITPKAEKAEEAPAEDAAPAEDDAEKAE. Positions 126–142 are enriched in acidic residues; that stretch reads APAEDAAPAEDDAEKAE.

This sequence belongs to the bacterial ribosomal protein bS16 family.

The chain is Small ribosomal subunit protein bS16 from Kocuria rhizophila (strain ATCC 9341 / DSM 348 / NBRC 103217 / DC2201).